The primary structure comprises 382 residues: Mannitol-1-phosphate 5-dehydrogenase (382 aa).

3–14 (ALHFGAGNIGRG) contacts NAD(+). Lys269 is subject to N6-acetyllysine.

This sequence belongs to the mannitol dehydrogenase family.

The enzyme catalyses D-mannitol 1-phosphate + NAD(+) = beta-D-fructose 6-phosphate + NADH + H(+). This is Mannitol-1-phosphate 5-dehydrogenase from Escherichia coli O139:H28 (strain E24377A / ETEC).